The sequence spans 134 residues: Transmembrane protein 100 (134 aa).

The tract at residues 1–24 is disordered; the sequence is MTEEPTKENLGGPKSPTPVTMEKS. Position 15 is a phosphoserine (Ser15). A run of 2 helical transmembrane segments spans residues 56–76 and 84–104; these read CIIPFAVVVFITGIVVTAVAY and VISILGLVLLSSGLFLLASSA. The residue at position 121 (Ser121) is a Phosphoserine.

In terms of assembly, interacts (via C-terminus) with TRPA1 and TRPV1. Interacts with TASOR.

Its subcellular location is the cell membrane. It localises to the membrane. It is found in the perikaryon. The protein localises to the cytoplasm. The protein resides in the perinuclear region. Its subcellular location is the endoplasmic reticulum. Plays a role during embryonic arterial endothelium differentiation and vascular morphogenesis through the ACVRL1 receptor-dependent signaling pathway upon stimulation by bone morphogenetic proteins, such as GDF2/BMP9 and BMP10. Involved in the regulation of nociception, acting as a modulator of the interaction between TRPA1 and TRPV1, two molecular sensors and mediators of pain signals in dorsal root ganglia (DRG) neurons. Mechanistically, it weakens their interaction, thereby releasing the inhibition of TRPA1 by TRPV1 and increasing the single-channel open probability of the TRPA1-TRPV1 complex. This Rattus norvegicus (Rat) protein is Transmembrane protein 100 (Tmem100).